A 262-amino-acid chain; its full sequence is Homeobox-leucine zipper protein HOX24 (262 aa).

Disordered regions lie at residues 44–68 and 162–189; these read AAGR…RKRR and LNER…NSVM. The segment covering 46-62 has biased composition (gly residues); the sequence is GRGGGDGDGGGGGGGGG. Positions 61–122 form a DNA-binding region, homeobox; that stretch reads GGGERKRRFT…NKRARWRSKQ (62 aa). Positions 121–165 are leucine-zipper; the sequence is KQIEHDYAALRAQYDALHARVESLRQEKLALAAQVDELRGKLNER.

It belongs to the HD-ZIP homeobox family. Class I subfamily. In terms of tissue distribution, expressed in roots and panicles.

The protein localises to the nucleus. Probable transcription factor. In Oryza sativa subsp. indica (Rice), this protein is Homeobox-leucine zipper protein HOX24 (HOX24).